Consider the following 537-residue polypeptide: Berberine bridge enzyme-like 26 (537 aa).

Residues 1-27 (MGISKPLPLFSILVLYFSLYTITPTSS) form the signal peptide. An intrachain disulfide couples C38 to C102. N59 carries an N-linked (GlcNAc...) asparagine glycan. The FAD-binding PCMH-type domain occupies 80-256 (SMPKPGFIFS…LAWKIKLVPV (177 aa)). The segment at residues 117–181 (HDYEGLSYVS…KVHGFPAGLC (65 aa)) is a cross-link (6-(S-cysteinyl)-8alpha-(pros-histidyl)-FAD (His-Cys)). N-linked (GlcNAc...) asparagine glycosylation occurs at N306.

It belongs to the oxygen-dependent FAD-linked oxidoreductase family. Requires FAD as cofactor. The FAD cofactor is bound via a bicovalent 6-S-cysteinyl, 8alpha-N1-histidyl FAD linkage.

Its subcellular location is the secreted. It localises to the cell wall. This is Berberine bridge enzyme-like 26 from Arabidopsis thaliana (Mouse-ear cress).